Reading from the N-terminus, the 282-residue chain is Putative phosphoesterase 244L (282 aa).

Residues Asp-45, Asn-80, and His-203 each coordinate a divalent metal cation.

Belongs to the metallophosphoesterase superfamily. IIV-6 244L family.

This chain is Putative phosphoesterase 244L, found in Invertebrate iridescent virus 6 (IIV-6).